A 445-amino-acid chain; its full sequence is Enolase 2 (445 aa).

Substrate is bound by residues His164 and Glu173. The active-site Proton donor is Glu216. Mg(2+) is bound by residues Asp251, Glu301, and Asp328. Positions 301 and 328 each coordinate substrate. The Proton acceptor role is filled by Lys353. Substrate is bound by residues 380–383 (SHRS) and Lys404.

It belongs to the enolase family. As to quaternary structure, homodimer. Mg(2+) is required as a cofactor.

Its subcellular location is the cytoplasm. It catalyses the reaction (2R)-2-phosphoglycerate = phosphoenolpyruvate + H2O. It functions in the pathway carbohydrate degradation; glycolysis; pyruvate from D-glyceraldehyde 3-phosphate: step 4/5. This Hevea brasiliensis (Para rubber tree) protein is Enolase 2 (ENO2).